A 406-amino-acid polypeptide reads, in one-letter code: Phosphorylase b kinase gamma catalytic chain, liver/testis isoform (406 aa).

A Protein kinase domain is found at 24 to 291; sequence YDPKDIIGRG…AEQALQHPFF (268 aa). ATP contacts are provided by residues 30–38 and lysine 53; that span reads IGRGVSSVV. Aspartate 153 (proton acceptor) is an active-site residue. The segment at 306-330 is calmodulin-binding (domain-N); that stretch reads QRFRVAVWTILAAGRVALSSHRLRP. The calmodulin-binding (domain-C) stretch occupies residues 346–370; the sequence is VRRLIDNCAFRLYGHWVKKGEQQNR.

The protein belongs to the protein kinase superfamily. CAMK Ser/Thr protein kinase family. In terms of assembly, hexadecamer of 4 heterotetramers, each composed of alpha, beta, gamma, and delta subunits. Alpha (PHKA1 or PHKA2) and beta (PHKB) are regulatory subunits, gamma (PHKG1 or PHKG2) is the catalytic subunit, and delta is calmodulin.

It carries out the reaction 2 ATP + phosphorylase b = 2 ADP + phosphorylase a.. Functionally, catalytic subunit of the phosphorylase b kinase (PHK), which mediates the neural and hormonal regulation of glycogen breakdown (glycogenolysis) by phosphorylating and thereby activating glycogen phosphorylase. May regulate glycogeneolysis in the testis. In vitro, phosphorylates PYGM. In Mus musculus (Mouse), this protein is Phosphorylase b kinase gamma catalytic chain, liver/testis isoform (Phkg2).